Consider the following 351-residue polypeptide: Hydroxymethylglutaryl-CoA synthase (351 aa).

E80 acts as the Proton donor/acceptor in catalysis. C112 acts as the Acyl-thioester intermediate in catalysis. Residues C112 and S153 each coordinate (3S)-3-hydroxy-3-methylglutaryl-CoA. R199 provides a ligand contact to CoA. Positions 201 and 234 each coordinate (3S)-3-hydroxy-3-methylglutaryl-CoA. H234 acts as the Proton donor/acceptor in catalysis. K239 is a CoA binding site. 3 residues coordinate (3S)-3-hydroxy-3-methylglutaryl-CoA: R243, N266, and S296.

It belongs to the thiolase-like superfamily. Archaeal HMG-CoA synthase family. In terms of assembly, interacts with acetoacetyl-CoA thiolase that catalyzes the precedent step in the pathway and with a DUF35 protein. The acetoacetyl-CoA thiolase/HMG-CoA synthase complex channels the intermediate via a fused CoA-binding site, which allows for efficient coupling of the endergonic thiolase reaction with the exergonic HMGCS reaction.

It carries out the reaction acetoacetyl-CoA + acetyl-CoA + H2O = (3S)-3-hydroxy-3-methylglutaryl-CoA + CoA + H(+). It functions in the pathway metabolic intermediate biosynthesis; (R)-mevalonate biosynthesis; (R)-mevalonate from acetyl-CoA: step 2/3. In terms of biological role, catalyzes the condensation of acetyl-CoA with acetoacetyl-CoA to form 3-hydroxy-3-methylglutaryl-CoA (HMG-CoA). Functions in the mevalonate (MVA) pathway leading to isopentenyl diphosphate (IPP), a key precursor for the biosynthesis of isoprenoid compounds that are building blocks of archaeal membrane lipids. The sequence is that of Hydroxymethylglutaryl-CoA synthase from Thermoplasma acidophilum (strain ATCC 25905 / DSM 1728 / JCM 9062 / NBRC 15155 / AMRC-C165).